The primary structure comprises 322 residues: Mas-related G-protein coupled receptor member X3 (322 aa).

Residues 1 to 31 (MDSTIPVLGTELTPINGREETPCYKQTLSFT) are Extracellular-facing. The helical transmembrane segment at 32–52 (GLTCIVSLVALTGNAVVLWLL) threads the bilayer. The Cytoplasmic portion of the chain corresponds to 53-60 (GCRMRRNA). Residues 61–81 (VSIYILNLVAADFLFLSGHII) form a helical membrane-spanning segment. The Extracellular portion of the chain corresponds to 82–96 (CSPLRLINIRHPISK). A helical transmembrane segment spans residues 97-117 (ILSPVMTFPYFIGLSMLSAIS). Residues 118 to 140 (TERCLSILWPIWYHCRRPRYLSS) are Cytoplasmic-facing. A helical transmembrane segment spans residues 141–161 (VMCVLLWALSLLRSILEWMFC). At 162–177 (DFLFSGANSVWCETSD) the chain is on the extracellular side. The helical transmembrane segment at 178-198 (FITIAWLVFLCVVLCGSSLVL) threads the bilayer. Residues 199–213 (LVRILCGSRKMPLTR) lie on the Cytoplasmic side of the membrane. A helical transmembrane segment spans residues 214–234 (LYVTILLTVLVFLLCGLPFGI). At 235-254 (QWALFSRIHLDWKVLFCHVH) the chain is on the extracellular side. The helical transmembrane segment at 255 to 275 (LVSIFLSALNSSANPIIYFFV) threads the bilayer. Residues 276 to 322 (GSFRQRQNRQNLKLVLQRALQDTPEVDEGGGWLPQETLELSGSRLEQ) are Cytoplasmic-facing.

It belongs to the G-protein coupled receptor 1 family. Mas subfamily. As to expression, uniquely localized in a subset of small dorsal root and trigeminal sensory neurons.

The protein resides in the cell membrane. In terms of biological role, orphan receptor. Probably involved in the function of nociceptive neurons. May regulate nociceptor function and/or development, including the sensation or modulation of pain. Potently activated by enkephalins. The polypeptide is Mas-related G-protein coupled receptor member X3 (MRGPRX3) (Homo sapiens (Human)).